We begin with the raw amino-acid sequence, 66 residues long: COP-associated protein (66 aa).

The 66-residue stretch at 1–66 (MKVTFQVPSI…ALLDAGQEVV (66 aa)) folds into the HMA domain. Cu cation-binding residues include Cys12 and Cys15.

Part of a cation-transporting system which is associated with copper export out of the H.pylori cells. The protein is COP-associated protein (copP) of Helicobacter pylori (strain J99 / ATCC 700824) (Campylobacter pylori J99).